The chain runs to 307 residues: 4-diphosphocytidyl-2-C-methyl-D-erythritol kinase (307 aa).

Lys9 is a catalytic residue. Residue 94 to 104 (PIGAGLAGGSS) coordinates ATP. Asp136 is an active-site residue.

The protein belongs to the GHMP kinase family. IspE subfamily.

The catalysed reaction is 4-CDP-2-C-methyl-D-erythritol + ATP = 4-CDP-2-C-methyl-D-erythritol 2-phosphate + ADP + H(+). It participates in isoprenoid biosynthesis; isopentenyl diphosphate biosynthesis via DXP pathway; isopentenyl diphosphate from 1-deoxy-D-xylulose 5-phosphate: step 3/6. Its function is as follows. Catalyzes the phosphorylation of the position 2 hydroxy group of 4-diphosphocytidyl-2C-methyl-D-erythritol. The sequence is that of 4-diphosphocytidyl-2-C-methyl-D-erythritol kinase from Synechococcus sp. (strain CC9605).